We begin with the raw amino-acid sequence, 536 residues long: MAKQVVFDREAREALEKGITKLTEAVRVTLGPRGRNVVLEKKFGAPTITNDGVTIAKEVELEDPLENVGALLVREVASKTNDVAGDGTTTACVLAQAIVREGMKNVAAGANPMFMKRGIEKAVAAVVENLKAQARPVETKDSISQVASISANDPQIGALVADAMEKVGKDGVITVEESKGMETAVDVVEGMQFDRGYISPYMVTDNERMEAVLEEPYILITDKKITAVADLVPVLERVVRTGKPLLIICEDMEGEALATLVVNKIRGTFTCVAVKAPAFGDRRKAMLQDIAILTGGQVITEEAGLKLENTTLDMLGQARQVRVGKEETTIVEGRGKEEAIEARIAQIRREYEESTSDYDREKLQERLAKLAGGVAVIKVGAATETEMKEKKMRIEDALAATRAAVEEGIVPGGGTALVRAQTALDGVQAQGDELTGVRLVYRALEEPMRQIAANAGVDGSVVVEKVRQSGDSMGFNAATREYVNLFEAGIVDPLKVTRSALENAASIASLVLTTESLIADIPEEEPPVPGGGMPPM.

ATP contacts are provided by residues 29–32 (TLGP), 86–90 (DGTTT), G413, 476–478 (NAA), and D492.

The protein belongs to the chaperonin (HSP60) family. In terms of assembly, forms a cylinder of 14 subunits composed of two heptameric rings stacked back-to-back. Interacts with the co-chaperonin GroES.

The protein resides in the cytoplasm. It catalyses the reaction ATP + H2O + a folded polypeptide = ADP + phosphate + an unfolded polypeptide.. In terms of biological role, together with its co-chaperonin GroES, plays an essential role in assisting protein folding. The GroEL-GroES system forms a nano-cage that allows encapsulation of the non-native substrate proteins and provides a physical environment optimized to promote and accelerate protein folding. The sequence is that of Chaperonin GroEL 2 from Moorella thermoacetica (strain ATCC 39073 / JCM 9320).